The following is a 291-amino-acid chain: Nucleotide-binding protein LJ_0866 (291 aa).

13 to 20 contacts ATP; that stretch reads GMSGAGKT. 63–66 is a GTP binding site; sequence DLRV.

Belongs to the RapZ-like family.

Functionally, displays ATPase and GTPase activities. The sequence is that of Nucleotide-binding protein LJ_0866 from Lactobacillus johnsonii (strain CNCM I-12250 / La1 / NCC 533).